The sequence spans 206 residues: Protein-methionine-sulfoxide reductase heme-binding subunit MsrQ (206 aa).

5 helical membrane passes run Ile-13 to Gly-33, Leu-79 to Glu-99, Pro-116 to Thr-136, Trp-147 to Trp-167, and Val-169 to Leu-189.

The protein belongs to the MsrQ family. In terms of assembly, heterodimer of a catalytic subunit (MsrP) and a heme-binding subunit (MsrQ). FMN is required as a cofactor. The cofactor is heme b.

It is found in the cell inner membrane. Part of the MsrPQ system that repairs oxidized periplasmic proteins containing methionine sulfoxide residues (Met-O), using respiratory chain electrons. Thus protects these proteins from oxidative-stress damage caused by reactive species of oxygen and chlorine generated by the host defense mechanisms. MsrPQ is essential for the maintenance of envelope integrity under bleach stress, rescuing a wide series of structurally unrelated periplasmic proteins from methionine oxidation. MsrQ provides electrons for reduction to the reductase catalytic subunit MsrP, using the quinone pool of the respiratory chain. This Yersinia pestis bv. Antiqua (strain Antiqua) protein is Protein-methionine-sulfoxide reductase heme-binding subunit MsrQ.